The primary structure comprises 389 residues: S-adenosylmethionine synthase (389 aa).

His-15 is a binding site for ATP. Mg(2+) is bound at residue Asp-17. Glu-43 is a K(+) binding site. L-methionine-binding residues include Glu-56 and Gln-99. Positions 99–109 (QSPDIAQGVNE) are flexible loop. ATP-binding positions include 166-168 (DAK), 234-235 (RF), Asp-243, 249-250 (RK), Ala-266, and Lys-270. An L-methionine-binding site is contributed by Asp-243. Residue Lys-274 participates in L-methionine binding.

It belongs to the AdoMet synthase family. In terms of assembly, homotetramer; dimer of dimers. It depends on Mg(2+) as a cofactor. The cofactor is K(+).

Its subcellular location is the cytoplasm. It carries out the reaction L-methionine + ATP + H2O = S-adenosyl-L-methionine + phosphate + diphosphate. The protein operates within amino-acid biosynthesis; S-adenosyl-L-methionine biosynthesis; S-adenosyl-L-methionine from L-methionine: step 1/1. Catalyzes the formation of S-adenosylmethionine (AdoMet) from methionine and ATP. The overall synthetic reaction is composed of two sequential steps, AdoMet formation and the subsequent tripolyphosphate hydrolysis which occurs prior to release of AdoMet from the enzyme. The protein is S-adenosylmethionine synthase of Neisseria meningitidis serogroup C (strain 053442).